Reading from the N-terminus, the 529-residue chain is Polygalacturonase (529 aa).

The signal sequence occupies residues 1–21 (MNHRYTLLALAAAALSAGAHA). The active-site Proton donor is the Asp-305. The active site involves His-331. A required for PGA export across the outer membrane and catalytic activity region spans residues 516–529 (AFVPLKSVAPTSPI).

The protein belongs to the glycosyl hydrolase 28 family. Monomer.

Its subcellular location is the secreted. The catalysed reaction is (1,4-alpha-D-galacturonosyl)n+m + H2O = (1,4-alpha-D-galacturonosyl)n + (1,4-alpha-D-galacturonosyl)m.. Functionally, contributes to the wilt disease production on tomato. The sequence is that of Polygalacturonase (pglA) from Ralstonia solanacearum (Pseudomonas solanacearum).